Reading from the N-terminus, the 295-residue chain is Pyridoxal 5'-phosphate synthase subunit PdxS (295 aa).

A D-ribose 5-phosphate-binding site is contributed by D25. K82 (schiff-base intermediate with D-ribose 5-phosphate) is an active-site residue. G154 lines the D-ribose 5-phosphate pocket. Position 166 (R166) interacts with D-glyceraldehyde 3-phosphate. Residues G215 and 236-237 contribute to the D-ribose 5-phosphate site; that span reads GS.

Belongs to the PdxS/SNZ family. In terms of assembly, in the presence of PdxT, forms a dodecamer of heterodimers.

It catalyses the reaction aldehydo-D-ribose 5-phosphate + D-glyceraldehyde 3-phosphate + L-glutamine = pyridoxal 5'-phosphate + L-glutamate + phosphate + 3 H2O + H(+). Its pathway is cofactor biosynthesis; pyridoxal 5'-phosphate biosynthesis. Catalyzes the formation of pyridoxal 5'-phosphate from ribose 5-phosphate (RBP), glyceraldehyde 3-phosphate (G3P) and ammonia. The ammonia is provided by the PdxT subunit. Can also use ribulose 5-phosphate and dihydroxyacetone phosphate as substrates, resulting from enzyme-catalyzed isomerization of RBP and G3P, respectively. The protein is Pyridoxal 5'-phosphate synthase subunit PdxS of Haemophilus ducreyi (strain 35000HP / ATCC 700724).